A 540-amino-acid chain; its full sequence is Glucose-6-phosphate isomerase (540 aa).

The Proton donor role is filled by glutamate 350. Residues histidine 381 and lysine 503 contribute to the active site.

This sequence belongs to the GPI family.

Its subcellular location is the cytoplasm. The enzyme catalyses alpha-D-glucose 6-phosphate = beta-D-fructose 6-phosphate. The protein operates within carbohydrate biosynthesis; gluconeogenesis. It participates in carbohydrate degradation; glycolysis; D-glyceraldehyde 3-phosphate and glycerone phosphate from D-glucose: step 2/4. Functionally, catalyzes the reversible isomerization of glucose-6-phosphate to fructose-6-phosphate. This chain is Glucose-6-phosphate isomerase, found in Burkholderia orbicola (strain MC0-3).